Reading from the N-terminus, the 117-residue chain is Large ribosomal subunit protein bL20 (117 aa).

Belongs to the bacterial ribosomal protein bL20 family.

Its function is as follows. Binds directly to 23S ribosomal RNA and is necessary for the in vitro assembly process of the 50S ribosomal subunit. It is not involved in the protein synthesizing functions of that subunit. In Rickettsia rickettsii (strain Iowa), this protein is Large ribosomal subunit protein bL20.